We begin with the raw amino-acid sequence, 170 residues long: Cathelicidin antimicrobial peptide (170 aa).

The first 30 residues, 1-30, serve as a signal peptide directing secretion; sequence MKTQMDGHSLGRWSLVLLLLGLVMPLAIVA. A propeptide spans 31 to 131 (cathelin-like domain (CLD)); that stretch reads QVLSYKEAVL…DISCDKDNRR (101 aa). 2 disulfides stabilise this stretch: Cys-86–Cys-97 and Cys-108–Cys-125. The interval 150-162 is active core; it reads FKRIVQRIKDFLR.

Belongs to the cathelicidin family. As to quaternary structure, monomer, homodimer or homotrimer (in vitro). Oligomerizes as tetra- or hexamer in solution (in vitro). Proteolytically cleaved by proteinase PRTN3 into antibacterial peptide LL-37. Proteolytically cleaved by cathepsin CTSG and neutrophil elastase ELANE. In terms of processing, resistant to proteolytic degradation in solution, and when bound to both zwitterionic (mimicking mammalian membranes) and negatively charged membranes (mimicking bacterial membranes). Post-translationally, after secretion onto the skin surface, the CAMP gene product is processed by a serine protease-dependent mechanism into multiple novel antimicrobial peptides distinct from and shorter than cathelicidin LL-37. These peptides show enhanced antimicrobial action, acquiring the ability to kill skin pathogens such as S.aureus, E.coli and C.albicans. These peptides have lost the ability to stimulate CXCL8/IL8 release from keratinocytes. The peptides act synergistically, killing bacteria at lower concentrations when present together, and maintain activity at increased salt condition.

Its subcellular location is the secreted. It localises to the vesicle. Antimicrobial protein that is an integral component of the innate immune system. Binds to bacterial lipopolysaccharides (LPS). Acts via neutrophil N-formyl peptide receptors to enhance the release of CXCL2. Postsecretory processing generates multiple cathelicidin antimicrobial peptides with various lengths which act as a topical antimicrobial defense in sweat on skin. The unprocessed precursor form, cathelicidin antimicrobial peptide, inhibits the growth of Gram-negative E.coli and E.aerogenes with efficiencies comparable to that of the mature peptide LL-37 (in vitro). In terms of biological role, antimicrobial peptide that is an integral component of the innate immune system. Binds to bacterial lipopolysaccharides (LPS). Causes membrane permeabilization by forming transmembrane pores (in vitro). Causes lysis of E.coli. Exhibits antimicrobial activity against Gram-negative bacteria such as P.aeruginosa, S.typhimurium, E.aerogenes, E.coli and P.syringae, Gram-positive bacteria such as L.monocytogenes, S.epidermidis, S.pyogenes and S.aureus, as well as vancomycin-resistant enterococci (in vitro). Exhibits antimicrobial activity against methicillin-resistant S.aureus, P.mirabilis, and C.albicans in low-salt media, but not in media containing 100 mM NaCl (in vitro). Forms chiral supramolecular assemblies with quinolone signal (PQS) molecules of P.aeruginosa, which may lead to interference of bacterial quorum signaling and perturbance of bacterial biofilm formation. May form supramolecular fiber-like assemblies on bacterial membranes. Induces cytokine and chemokine producation as well as TNF/TNFA and CSF2/GMCSF production in normal human keratinocytes. Exhibits hemolytic activity against red blood cells. Its function is as follows. Exhibits antimicrobial activity against E.coli and B.megaterium (in vitro). This Pongo pygmaeus (Bornean orangutan) protein is Cathelicidin antimicrobial peptide.